A 133-amino-acid polypeptide reads, in one-letter code: Fatty acid-binding protein (133 aa).

It belongs to the calycin superfamily. Fatty-acid binding protein (FABP) family.

In Clonorchis sinensis (Chinese liver fluke), this protein is Fatty acid-binding protein.